We begin with the raw amino-acid sequence, 246 residues long: uncharacterized protein (246 aa).

Disordered regions lie at residues 29-54 (SLET…ENGS), 93-114 (LRRT…EDKF), and 148-246 (PIPP…SVVI). Over residues 35–49 (PTSSSPSLSSNSDVS) the composition is skewed to low complexity. The segment covering 172–183 (RQQTNNIRTLHV) has biased composition (polar residues). Composition is skewed to low complexity over residues 190–203 (SSSS…PSSS) and 214–225 (SKTTKNRSSNSS). The N-linked (GlcNAc...) asparagine glycan is linked to asparagine 219. Positions 235-246 (LTPSPTFESVVI) are enriched in polar residues.

This is an uncharacterized protein from Caenorhabditis elegans.